Consider the following 397-residue polypeptide: Golgi-associated RAB2 interactor protein 2 (397 aa).

2 disordered regions span residues 1–24 (MKKS…PDSK) and 342–397 (QTTL…KLLN). Basic and acidic residues-rich tracts occupy residues 10–24 (TRID…PDSK), 353–369 (EKSK…RTMD), and 376–397 (KAEE…KLLN).

This sequence belongs to the GARIN family. Interacts with CALM1.

The protein resides in the cell projection. Its subcellular location is the cilium. It is found in the flagellum. In terms of biological role, seems to play a role in sperm motility. The protein is Golgi-associated RAB2 interactor protein 2 (GARIN2) of Bos taurus (Bovine).